Consider the following 255-residue polypeptide: Taurine import ATP-binding protein TauB (255 aa).

Residues 2–229 form the ABC transporter domain; that stretch reads LQISHLYADY…RFVAGESSRS (228 aa). 34-41 is a binding site for ATP; sequence GPSGCGKT.

It belongs to the ABC transporter superfamily. Taurine importer (TC 3.A.1.17.1) family. The complex is composed of two ATP-binding proteins (TauB), two transmembrane proteins (TauC) and a solute-binding protein (TauA).

The protein localises to the cell inner membrane. The catalysed reaction is taurine(out) + ATP + H2O = taurine(in) + ADP + phosphate + H(+). Its function is as follows. Part of the ABC transporter complex TauABC involved in taurine import. Responsible for energy coupling to the transport system. This Escherichia coli O157:H7 protein is Taurine import ATP-binding protein TauB.